The following is a 156-amino-acid chain: Small ribosomal subunit protein uS7cz/uS7cy (156 aa).

It belongs to the universal ribosomal protein uS7 family. Part of the 30S ribosomal subunit.

The protein localises to the plastid. It is found in the chloroplast. One of the primary rRNA binding proteins, it binds directly to 16S rRNA where it nucleates assembly of the head domain of the 30S subunit. The polypeptide is Small ribosomal subunit protein uS7cz/uS7cy (rps7-A) (Triticum aestivum (Wheat)).